Here is a 596-residue protein sequence, read N- to C-terminus: Fructan 1-exohydrolase w2 (596 aa).

Residues 1–20 form the signal peptide; the sequence is MAQAWAFLLPVLVLGSYVTS. The active site involves D75. 3 N-linked (GlcNAc...) asparagine glycosylation sites follow: N168, N236, and N248. A disulfide bond links C446 and C492. The N-linked (GlcNAc...) asparagine glycan is linked to N567.

Belongs to the glycosyl hydrolase 32 family.

The enzyme catalyses Hydrolysis of terminal, non-reducing (2-&gt;1)-linked beta-D-fructofuranose residues in fructans.. Inhibited by sucrose. In terms of biological role, hydrolyzes inulin-type beta-(2,1)-fructans, but not beta-(2,1)-linkages in branched fructans. Has low activity against beta-(2,6)-linked fructans. May play a role as a beta-(2,1)-trimmer during graminan biosynthesis. In Triticum aestivum (Wheat), this protein is Fructan 1-exohydrolase w2.